The chain runs to 229 residues: Lantibiotic transport ATP-binding protein SrtF (229 aa).

In terms of domain architecture, ABC transporter spans 2 to 225; sequence LKIQNLKKSY…EELFNNQILF (224 aa). 34 to 41 contributes to the ATP binding site; sequence GPNGAGKS.

It belongs to the ABC transporter superfamily.

In terms of biological role, implicated in the export process of the lantibiotic SrtA. The sequence is that of Lantibiotic transport ATP-binding protein SrtF (srtF) from Streptococcus pyogenes serotype M1.